We begin with the raw amino-acid sequence, 304 residues long: Oxidoreductase calM (304 aa).

I26, T45, D68, and N98 together coordinate NADP(+). S152 functions as the Proton donor in the catalytic mechanism. 4 residues coordinate NADP(+): Y166, K170, V200, and T202. The active-site Proton acceptor is Y166. Residue K170 is the Lowers pKa of active site Tyr of the active site.

It belongs to the short-chain dehydrogenases/reductases (SDR) family.

It functions in the pathway secondary metabolite biosynthesis. Functionally, oxidoreductase; part of the gene cluster that mediates the biosynthesis of calbistrin A and related compounds. Calbistrin A is a secondary metabolite with an interesting structure that was recently found to have bioactivity against leukemia cells. It consists of two polyketides linked by an ester bond: a bicyclic decalin containing polyketide and a linear 12 carbon dioic acid structure. The polyketide synthase calA is probably responsible for forming the decalin moiety. Because calA lacks a designated enoylreductase (ER) domain, the required activity is provided by the trans-enoyl reductase calK. Following release from the PKS, calF then probably catalyzes the oxidation and the subsequent Diels Alder cycloisomerization that lead to the formation of the decalin moiety. The decalin polyketide backbone includes two C-methyl groups, at C7 and C11 in backbone, of which the C7 position is probably methylated by the methyltransferase domain of calA. A candidate for adding the methyl group at C11, if not done by CalA, is the cluster methyltransferase calH. Several additional tailoring enzymes within the cluster could be involved in the modification of the decalin polyketide product. Those include the 3 cytochrome P450 monooxygenases CalE, CalG and CalL, of which one might be responsible for the introduction of the extra hydroxyl group attached to the backbone of the decalin moiety, at position C9 in the backbone, that allows for attachment of the linear moiety. One tailoring enzyme activity that is expected to be involved in biosynthesis of calbistrin is an acyltransferase for connecting the two polyketide synthase products, and which could be performed by the cluster acyltransferase calJ. The enzyme responsible for the biosynthesis of the linear moiety, probably a second PKS, has not been identified yet. This Penicillium decumbens protein is Oxidoreductase calM.